We begin with the raw amino-acid sequence, 377 residues long: Protein RecA (377 aa).

76–83 (GPESSGKT) is a binding site for ATP.

The protein belongs to the RecA family.

The protein resides in the cytoplasm. In terms of biological role, can catalyze the hydrolysis of ATP in the presence of single-stranded DNA, the ATP-dependent uptake of single-stranded DNA by duplex DNA, and the ATP-dependent hybridization of homologous single-stranded DNAs. It interacts with LexA causing its activation and leading to its autocatalytic cleavage. This chain is Protein RecA, found in Corynebacterium aurimucosum (strain ATCC 700975 / DSM 44827 / CIP 107346 / CN-1) (Corynebacterium nigricans).